Consider the following 236-residue polypeptide: uncharacterized protein (236 aa).

Positions 1-23 are cleaved as a signal peptide; it reads MRRILSILVFAIMLAGCSSNAST. The segment at 22–62 is disordered; the sequence is STEKQHAGGEKTVKAEPQSTSSQKDSTDDYQPNSQVTDDRT. A compositionally biased stretch (basic and acidic residues) spans 24–35; that stretch reads EKQHAGGEKTVK.

This is an uncharacterized protein from Bacillus subtilis (strain 168).